A 122-amino-acid chain; its full sequence is Large ribosomal subunit protein uL14 (122 aa).

The protein belongs to the universal ribosomal protein uL14 family. As to quaternary structure, part of the 50S ribosomal subunit. Forms a cluster with proteins L3 and L19. In the 70S ribosome, L14 and L19 interact and together make contacts with the 16S rRNA in bridges B5 and B8.

In terms of biological role, binds to 23S rRNA. Forms part of two intersubunit bridges in the 70S ribosome. This chain is Large ribosomal subunit protein uL14, found in Exiguobacterium sp. (strain ATCC BAA-1283 / AT1b).